The primary structure comprises 205 residues: Ribonuclease HII (205 aa).

The 190-residue stretch at 16–205 (VSEVGIDEVG…KSFLNQSDLI (190 aa)) folds into the RNase H type-2 domain. The a divalent metal cation site is built by D22, E23, and D118.

The protein belongs to the RNase HII family. Mn(2+) is required as a cofactor. The cofactor is Mg(2+).

It is found in the cytoplasm. It carries out the reaction Endonucleolytic cleavage to 5'-phosphomonoester.. Functionally, endonuclease that specifically degrades the RNA of RNA-DNA hybrids. The protein is Ribonuclease HII of Prochlorococcus marinus (strain MIT 9312).